Here is a 317-residue protein sequence, read N- to C-terminus: SWI/SNF-related matrix-associated actin-dependent regulator of chromatin subfamily E member 1-related (317 aa).

A compositionally biased stretch (low complexity) spans 1–17 (MSHGPKQPGAAAAPAGG). The tract at residues 1–71 (MSHGPKQPGA…RKKILPNGPK (71 aa)) is disordered. Lysine 31 is covalently cross-linked (Glycyl lysine isopeptide (Lys-Gly) (interchain with G-Cter in SUMO2)). Residues 31-52 (KQERGEGPRAGEKGSHEEEPVK) show a composition bias toward basic and acidic residues. Basic residues predominate over residues 53-65 (KRGWPKGKKRKKI). A DNA-binding region (HMG box) is located at residues 70–138 (PKAPVTGYVR…QYMKELRAYQ (69 aa)). Serine 160 carries the phosphoserine modification. The stretch at 190 to 257 (EEFLDQNKAR…LQQQLQAVRQ (68 aa)) forms a coiled coil.

Component of a BHC histone deacetylase complex that contains HDAC1, HDAC2, HMG20B/BRAF35, KDM1A, RCOR1/CoREST and PHF21A/BHC80. The BHC complex may also contain ZMYM2, ZNF217, ZMYM3, GSE1 and GTF2I. Interacts with the BRCA2 tumor suppressor protein. Interacts with DTNB. Ubiquitously expressed in adult tissues.

It localises to the nucleus. The protein localises to the chromosome. Its function is as follows. Required for correct progression through G2 phase of the cell cycle and entry into mitosis. Required for RCOR1/CoREST mediated repression of neuronal specific gene promoters. In Homo sapiens (Human), this protein is SWI/SNF-related matrix-associated actin-dependent regulator of chromatin subfamily E member 1-related (HMG20B).